The chain runs to 241 residues: Putative lipoprotein YvcA (241 aa).

A signal peptide spans 1-18 (MKKIIFICFSLLLALTGG). Residue Cys-19 is the site of N-palmitoyl cysteine attachment. A lipid anchor (S-diacylglycerol cysteine) is attached at Cys-19. Residues 22 to 48 (NDNDKNSTNDNKTEAVKPKDMDPKDLP) are disordered. Over residues 23–46 (DNDKNSTNDNKTEAVKPKDMDPKD) the composition is skewed to basic and acidic residues.

The protein localises to the cell membrane. Required for complex colony architecture. The protein is Putative lipoprotein YvcA (yvcA) of Bacillus subtilis (strain 168).